Here is a 1097-residue protein sequence, read N- to C-terminus: DNA-directed RNA polymerase subunit beta (1097 aa).

The interval 1072–1097 (QDVNPRRSTPSRPTYESLGVADYDED) is disordered.

Belongs to the RNA polymerase beta chain family. As to quaternary structure, in cyanobacteria the RNAP catalytic core is composed of 2 alpha, 1 beta, 1 beta', 1 gamma and 1 omega subunit. When a sigma factor is associated with the core the holoenzyme is formed, which can initiate transcription.

It catalyses the reaction RNA(n) + a ribonucleoside 5'-triphosphate = RNA(n+1) + diphosphate. In terms of biological role, DNA-dependent RNA polymerase catalyzes the transcription of DNA into RNA using the four ribonucleoside triphosphates as substrates. This Synechococcus sp. (strain CC9902) protein is DNA-directed RNA polymerase subunit beta.